A 144-amino-acid chain; its full sequence is Large ribosomal subunit protein uL16 (144 aa).

A compositionally biased stretch (basic residues) spans 1 to 16 (MLTPKRVKHRKQHRGK). Residues 1–22 (MLTPKRVKHRKQHRGKMAGNAK) are disordered.

The protein belongs to the universal ribosomal protein uL16 family. As to quaternary structure, part of the 50S ribosomal subunit.

Its function is as follows. Binds 23S rRNA and is also seen to make contacts with the A and possibly P site tRNAs. The sequence is that of Large ribosomal subunit protein uL16 from Brevibacillus brevis (strain 47 / JCM 6285 / NBRC 100599).